The sequence spans 497 residues: NAD(P)H-quinone oxidoreductase subunit 2, chloroplastic (497 aa).

14 helical membrane passes run V13 to I33, S37 to F57, F76 to T96, G103 to L123, L129 to Y149, L164 to L184, I206 to F226, P240 to T260, W274 to A294, A311 to T331, Y332 to L352, A373 to F393, G406 to L426, and V462 to I482.

Belongs to the complex I subunit 2 family. In terms of assembly, NDH is composed of at least 16 different subunits, 5 of which are encoded in the nucleus.

It is found in the plastid. The protein resides in the chloroplast thylakoid membrane. The catalysed reaction is a plastoquinone + NADH + (n+1) H(+)(in) = a plastoquinol + NAD(+) + n H(+)(out). It catalyses the reaction a plastoquinone + NADPH + (n+1) H(+)(in) = a plastoquinol + NADP(+) + n H(+)(out). In terms of biological role, NDH shuttles electrons from NAD(P)H:plastoquinone, via FMN and iron-sulfur (Fe-S) centers, to quinones in the photosynthetic chain and possibly in a chloroplast respiratory chain. The immediate electron acceptor for the enzyme in this species is believed to be plastoquinone. Couples the redox reaction to proton translocation, and thus conserves the redox energy in a proton gradient. In Zygnema circumcarinatum (Green alga), this protein is NAD(P)H-quinone oxidoreductase subunit 2, chloroplastic.